The primary structure comprises 939 residues: Translation initiation factor IF-2 (939 aa).

The tract at residues 48–355 (KFAPAPKVEN…KPEKKEKEEE (308 aa)) is disordered. The span at 79 to 93 (QQNQAPKQPQQGTQN) shows a compositional bias: low complexity. Over residues 114–130 (SRDKNSRRDNNNRDGQR) the composition is skewed to basic and acidic residues. The segment covering 131 to 257 (DNNGGYRNND…NNDRNNNGGF (127 aa)) has biased composition (low complexity). The span at 287–355 (RNNDRRDSAP…KPEKKEKEEE (69 aa)) shows a compositional bias: basic and acidic residues. The tr-type G domain maps to 440-609 (PRPPVVCVMG…LLTAEVNELK (170 aa)). Residues 449–456 (GHVDHGKT) form a G1 region. 449–456 (GHVDHGKT) is a binding site for GTP. Residues 474–478 (GITQK) are G2. Residues 495–498 (DTPG) are G3. Residues 495-499 (DTPGH) and 549-552 (NKID) each bind GTP. Positions 549-552 (NKID) are G4. The G5 stretch occupies residues 585 to 587 (SAH).

Belongs to the TRAFAC class translation factor GTPase superfamily. Classic translation factor GTPase family. IF-2 subfamily.

It localises to the cytoplasm. Its function is as follows. One of the essential components for the initiation of protein synthesis. Protects formylmethionyl-tRNA from spontaneous hydrolysis and promotes its binding to the 30S ribosomal subunits. Also involved in the hydrolysis of GTP during the formation of the 70S ribosomal complex. The polypeptide is Translation initiation factor IF-2 (Lachnospira eligens (strain ATCC 27750 / DSM 3376 / VPI C15-48 / C15-B4) (Eubacterium eligens)).